The sequence spans 811 residues: Protein VAC14 homolog (811 aa).

HEAT repeat units follow at residues 81–119, 122–160, 240–278, 334–372, 375–412, 431–469, and 472–510; these read DSYMESILLPVLYCFNDSDSKIRYYACESMYNIGKVAKG, FRYFNLIFDVLCKLFADTEITVKNGAELLDRLIKDIVMQ, ISYLPFLLDGLMNYLSDPNESIRIVTSNCLYDFLREIQK, QIDYKRILEIIIDHLGSSVPLIQEKALKWLFEFIYIAPK, LLQIPKVLENLLPLMSNDENMRQSAKDLSQNLVILVSK, SVDFRSLIEVLQKLLSNDNEETRLCALEWVLLLQRRTGG, and INMHDPIFQTLLLQLSDPSDLVVSRTLELLAHIAISHKS. Low complexity predominate over residues 775-785; it reads TSASGITTTAS. Residues 775–811 are disordered; it reads TSASGITTTASNSRDSFITRLPPTAALSTGARKKPKQ.

This sequence belongs to the VAC14 family. Component of the PI(3,5)P2 regulatory complex, composed of ATG18, FIG4, FAB1, VAC14 and VAC7. VAC14 nucleates the assembly of the complex and serves as a scaffold.

The protein resides in the cytoplasm. The protein localises to the vacuole membrane. The PI(3,5)P2 regulatory complex regulates both the synthesis and turnover of phosphatidylinositol 3,5-bisphosphate (PtdIns(3,5)P2). Regulates the synthesis of PtdIns(3,5)P2 by positive activation of FAB1 and by controlling FIG4 localization. This is Protein VAC14 homolog from Schizosaccharomyces pombe (strain 972 / ATCC 24843) (Fission yeast).